The primary structure comprises 340 residues: 4-hydroxythreonine-4-phosphate dehydrogenase (340 aa).

His-141 and Thr-142 together coordinate substrate. 3 residues coordinate a divalent metal cation: His-177, His-222, and His-277. Residues Lys-285, Asn-294, and Arg-303 each coordinate substrate.

It belongs to the PdxA family. As to quaternary structure, homodimer. Zn(2+) is required as a cofactor. It depends on Mg(2+) as a cofactor. Co(2+) serves as cofactor.

It localises to the cytoplasm. It catalyses the reaction 4-(phosphooxy)-L-threonine + NAD(+) = 3-amino-2-oxopropyl phosphate + CO2 + NADH. It participates in cofactor biosynthesis; pyridoxine 5'-phosphate biosynthesis; pyridoxine 5'-phosphate from D-erythrose 4-phosphate: step 4/5. Functionally, catalyzes the NAD(P)-dependent oxidation of 4-(phosphooxy)-L-threonine (HTP) into 2-amino-3-oxo-4-(phosphooxy)butyric acid which spontaneously decarboxylates to form 3-amino-2-oxopropyl phosphate (AHAP). The polypeptide is 4-hydroxythreonine-4-phosphate dehydrogenase (Maricaulis maris (strain MCS10) (Caulobacter maris)).